The primary structure comprises 453 residues: uncharacterized protein (453 aa).

At 1–110 (MIQTQSTAIK…KAILRTFNHP (110 aa)) the chain is on the cytoplasmic side. The helical transmembrane segment at 111–131 (IALTELQFLVSAVLCVGFASI) threads the bilayer. At 132–172 (VNLFRLPRLKHTKFSKALNSFPDGILPEYLDGNFRSSILHK) the chain is on the lumenal side. Residues 173–193 (FLVPSKLVLMTTFPMGIFQFI) traverse the membrane as a helical segment. Topologically, residues 194–201 (GHITSHKA) are cytoplasmic. The chain crosses the membrane as a helical span at residues 202 to 222 (VSMIPVSLVHSVKALSPIITV). At 223–234 (GYYKFFEHRYYN) the chain is on the lumenal side. Residues 235 to 255 (SMTYYTLLLLIFGVMTTCWST) traverse the membrane as a helical segment. The Cytoplasmic portion of the chain corresponds to 256-269 (HGSKRASDNKSGSS). A helical membrane pass occupies residues 270-290 (LIGLLFAFISMIIFVAQNIFA). Over 291 to 332 (KNILTIRRKVGILPSSSTDDVTSKEGQPSLDKTRFSPLQVDK) the chain is Lumenal. The helical transmembrane segment at 333–353 (ITILFYCSCIGFSLTLLPFLT) threads the bilayer. The Cytoplasmic segment spans residues 354-371 (GELMHGGSVINDLTLETV). Residues 372–392 (ALVAIHGIAHFFQAMLAFQLI) form a helical membrane-spanning segment. Residues 393–413 (GLLSSINYSVANIMKRIVVIS) lie on the Lumenal side of the membrane. Residues 414–434 (VALFWETKLNFFQVFGVILTI) form a helical membrane-spanning segment. Topologically, residues 435 to 453 (AGLYGYDKWGLSKKDGRQA) are cytoplasmic.

Belongs to the TPT transporter family.

It localises to the membrane. Functionally, able to suppress the functional loss of YPT1. May form a channel. Protein SLY41 is not essential for cell viability. The SLY41 gene is a multicopy suppressor. This is an uncharacterized protein from Saccharomyces cerevisiae (strain ATCC 204508 / S288c) (Baker's yeast).